The following is a 294-amino-acid chain: Glyceraldehyde-3-phosphate dehydrogenase (294 aa).

NAD(+)-binding residues include Asp-19, Arg-63, and Thr-105. Residues 134 to 136 and Thr-165 contribute to the D-glyceraldehyde 3-phosphate site; that span reads SCT. Cys-135 serves as the catalytic Nucleophile. An N6-acetyllysine modification is found at Lys-177. D-glyceraldehyde 3-phosphate-binding positions include 194 to 195 and Arg-217; that span reads TG. An N6-acetyllysine modification is found at Lys-234.

This sequence belongs to the glyceraldehyde-3-phosphate dehydrogenase family. In terms of assembly, homotetramer.

It is found in the cytoplasm. It catalyses the reaction D-glyceraldehyde 3-phosphate + phosphate + NAD(+) = (2R)-3-phospho-glyceroyl phosphate + NADH + H(+). It participates in carbohydrate degradation; glycolysis; pyruvate from D-glyceraldehyde 3-phosphate: step 1/5. Functionally, catalyzes the oxidative phosphorylation of glyceraldehyde 3-phosphate (G3P) to 1,3-bisphosphoglycerate (BPG) using the cofactor NAD. The first reaction step involves the formation of a hemiacetal intermediate between G3P and a cysteine residue, and this hemiacetal intermediate is then oxidized to a thioester, with concomitant reduction of NAD to NADH. The reduced NADH is then exchanged with the second NAD, and the thioester is attacked by a nucleophilic inorganic phosphate to produce BPG. This is Glyceraldehyde-3-phosphate dehydrogenase (gap) from Pseudescherichia vulneris (Escherichia vulneris).